We begin with the raw amino-acid sequence, 125 residues long: MORF4 family-associated protein 1 (125 aa).

The tract at residues 76–99 (ESALNHLQGAGGAEPRGPRAEKAD) is disordered. The stretch at 94–124 (RAEKADEKAQEMAKMAEMLVQLVRRIEKSES) forms a coiled coil.

This sequence belongs to the MORF4 family-associated protein family. Found in a complex composed of MORF4L1, MRFAP1 and RB1. Interacts via its N-terminus with MORF4L1. Interacts with CSTB and MORF4L2. As to expression, widely expressed in all tissues examined and as early as 7 days during embryonic development.

The protein localises to the nucleus. It is found in the cytoplasm. It localises to the perinuclear region. The sequence is that of MORF4 family-associated protein 1 from Mus musculus (Mouse).